The primary structure comprises 68 residues: Probable Sec-independent protein translocase protein TatE (68 aa).

Residues 1–21 traverse the membrane as a helical segment; sequence MGEISITKLLVVAALIILVFG. The disordered stretch occupies residues 43–68; the sequence is MNEDDDSAKKTTAEEEAPAQKLSHKE.

This sequence belongs to the TatA/E family. TatE subfamily.

The protein localises to the cell inner membrane. Functionally, part of the twin-arginine translocation (Tat) system that transports large folded proteins containing a characteristic twin-arginine motif in their signal peptide across membranes. TatE shares overlapping functions with TatA. The polypeptide is Probable Sec-independent protein translocase protein TatE (Klebsiella pneumoniae subsp. pneumoniae (strain ATCC 700721 / MGH 78578)).